A 265-amino-acid chain; its full sequence is Interleukin-2 receptor subunit alpha (265 aa).

An N-terminal signal peptide occupies residues 1-21; the sequence is MDSYLLMWGLLTLIMVPGCFA. Residues 22–84 form the Sushi 1 domain; the sequence is ELCDDDPPEI…SWDNQCQCTS (63 aa). Topologically, residues 22–240 are extracellular; sequence ELCDDDPPEI…ETFIFTTEYQ (219 aa). 3 cysteine pairs are disulfide-bonded: Cys-24–Cys-67, Cys-49–Cys-80, and Cys-51–Cys-82. N-linked (GlcNAc...) asparagine glycans are attached at residues Asn-70 and Asn-89. The span at 87 to 98 shows a compositional bias: polar residues; it reads TRNTTKQVTPQP. Residues 87 to 123 form a disordered region; the sequence is TRNTTKQVTPQPEEQKERKTTEMQSPMQPVDQASLPG. Positions 123 to 186 constitute a Sushi 2 domain; sequence GHCREPPPWE…WTQPQLICTG (64 aa). 2 disulfides stabilise this stretch: Cys-125–Cys-168 and Cys-152–Cys-184. Residues 190 to 210 are disordered; the sequence is TSQFPGEEKPQASPEGRPESE. Positions 195 to 209 are enriched in basic and acidic residues; that stretch reads GEEKPQASPEGRPES. The helical transmembrane segment at 241-259 threads the bilayer; that stretch reads VAVAGCVFLLISVLLLSGL. Residues 260–265 are Cytoplasmic-facing; it reads TWQRRQ.

In terms of assembly, non-covalent dimer of an alpha and a beta subunit. IL2R exists in 3 different forms: a high affinity dimer, an intermediate affinity monomer (beta subunit), and a low affinity monomer (alpha subunit). The high and intermediate affinity forms also associate with a gamma subunit.

The protein resides in the membrane. In terms of biological role, receptor for interleukin-2. The receptor is involved in the regulation of immune tolerance by controlling regulatory T cells (TREGs) activity. TREGs suppress the activation and expansion of autoreactive T-cells. This Pan troglodytes (Chimpanzee) protein is Interleukin-2 receptor subunit alpha (IL2RA).